A 270-amino-acid chain; its full sequence is Homeobox protein vent1B (270 aa).

2 stretches are compositionally biased toward basic and acidic residues: residues Glu17–Met26 and Tyr44–Glu59. Disordered stretches follow at residues Glu17 to Cys66 and Thr88 to Ala134. Over residues Trp89–Gly99 the composition is skewed to polar residues. The segment covering Gln116–Leu131 has biased composition (basic and acidic residues). The segment at residues Asp128 to Ile187 is a DNA-binding region (homeobox).

Expressed in the ventral marginal zone of gastrulae. At the end of gastrulation, predominantly localized to the ventral region of the closing slit blastopore. At early tail bud stage, expression is maintained only in the forming proctodeum.

Its subcellular location is the nucleus. Functionally, probable transcription regulator. Acts in a ventral signaling pathway downstream of bmp4 and vent2B. The polypeptide is Homeobox protein vent1B (vent1B) (Xenopus laevis (African clawed frog)).